A 654-amino-acid chain; its full sequence is WD repeat-containing protein 70 (654 aa).

Disordered stretches follow at residues Met-1–Gly-26 and Phe-43–Glu-175. Basic and acidic residues predominate over residues Gln-45–Glu-78. Positions Arg-99–Asp-111 are enriched in low complexity. A compositionally biased stretch (acidic residues) spans Asn-147 to Glu-164. Residues Asn-165 to Glu-175 show a composition bias toward basic and acidic residues. WD repeat units follow at residues His-180–Lys-219, Cys-227–Lys-268, Gly-281–Ser-321, Gly-330–Phe-369, Asp-376–Phe-415, Pro-421–Glu-466, and Ile-469–Ala-508. A Glycyl lysine isopeptide (Lys-Gly) (interchain with G-Cter in SUMO2) cross-link involves residue Lys-296. N6-acetyllysine is present on Lys-452. The span at Arg-540–Glu-565 shows a compositional bias: basic and acidic residues. The interval Arg-540–Thr-579 is disordered. A Phosphothreonine modification is found at Thr-579. Glycyl lysine isopeptide (Lys-Gly) (interchain with G-Cter in SUMO2) cross-links involve residues Lys-590 and Lys-596. Ser-621 and Ser-638 each carry phosphoserine. The interval Lys-630–Ile-654 is disordered. Basic and acidic residues predominate over residues Lys-644 to Ile-654.

Belongs to the WD repeat GAD-1 family.

This Homo sapiens (Human) protein is WD repeat-containing protein 70 (WDR70).